A 386-amino-acid chain; its full sequence is Galactokinase (386 aa).

Substrate is bound at residue 32-35 (EHTD). Residues Ser-66 and 123–129 (GASLSSS) contribute to the ATP site. Ser-129 and Glu-161 together coordinate Mg(2+). Catalysis depends on Asp-173, which acts as the Proton acceptor. Tyr-223 is a substrate binding site.

It belongs to the GHMP kinase family. GalK subfamily.

It localises to the cytoplasm. It carries out the reaction alpha-D-galactose + ATP = alpha-D-galactose 1-phosphate + ADP + H(+). It participates in carbohydrate metabolism; galactose metabolism. Its function is as follows. Catalyzes the transfer of the gamma-phosphate of ATP to D-galactose to form alpha-D-galactose-1-phosphate (Gal-1-P). The sequence is that of Galactokinase from Staphylococcus saprophyticus subsp. saprophyticus (strain ATCC 15305 / DSM 20229 / NCIMB 8711 / NCTC 7292 / S-41).